Here is a 199-residue protein sequence, read N- to C-terminus: Large ribosomal subunit protein bL9 (199 aa).

Over residues 149–166 the composition is skewed to basic and acidic residues; it reads AEAERINRGEDINSRQED. The interval 149–199 is disordered; that stretch reads AEAERINRGEDINSRQEDQDAAAEAIAAAGEFFDPEAQDETPETEAASEQQ. Residues 181–191 are compositionally biased toward acidic residues; that stretch reads FDPEAQDETPE.

This sequence belongs to the bacterial ribosomal protein bL9 family.

Functionally, binds to the 23S rRNA. The sequence is that of Large ribosomal subunit protein bL9 from Afipia carboxidovorans (strain ATCC 49405 / DSM 1227 / KCTC 32145 / OM5) (Oligotropha carboxidovorans).